Consider the following 550-residue polypeptide: Transcription factor 7-like 1-D (550 aa).

The interaction with CTNNB1-A stretch occupies residues 1-61; it reads MPQLNSGXGD…SENHSSDSDS (61 aa). Disordered regions lie at residues 1–77, 182–212, 390–473, and 488–514; these read MPQL…EKPR, GTPP…PYYP, WSAR…SLTT, and ASKS…SRPI. Basic and acidic residues-rich tracts occupy residues 17-32 and 52-77; these read ELIR…EKSP and SENH…EKPR. Residues 109-311 are interaction with AES and TLE4-A; the sequence is LGGITCPMVP…SPNLSMKSNV (203 aa). The HMG box DNA-binding region spans 323 to 391; that stretch reads IKKPLNAFML…LHSQLYPSWS (69 aa). Positions 406 to 415 are enriched in basic and acidic residues; sequence KQSPEMENYT. The interaction with CTBP-B stretch occupies residues 407-550; that stretch reads QSPEMENYTK…PLPLVARSSD (144 aa). Residues 444 to 455 are compositionally biased toward low complexity; the sequence is SPATPSAALASP.

It belongs to the TCF/LEF family. In terms of assembly, interacts with csnk1e, ctnnb1-A, ctbp-B, dact1-A and gsk3b. May interact with ase and tle4-A. Post-translationally, phosphorylated. Phosphorylation by csnk1e promotes binding to ctnnb1-A while phosphorylation by gsk3b may reverse this effect.

It is found in the nucleus. In terms of biological role, participates in the Wnt signaling pathway. Binds to DNA and acts as a repressor in the absence of ctnnb1-A and possibly ctnnb1-B, and as an activator in the presence of these proteins. Required early in development for the establishment of the dorsal body axis in response to maternal Wnt signaling. In Xenopus laevis (African clawed frog), this protein is Transcription factor 7-like 1-D (tcf7l1-d).